The following is a 62-amino-acid chain: MIPVRCFSCGKVISNYWDEYKRRVSDGENAAAVLDDLGITRYCCRRMLLSHVELVDVLSPYQ.

Residues Cys-6, Cys-9, Cys-43, and Cys-44 each coordinate Zn(2+).

This sequence belongs to the archaeal Rpo10/eukaryotic RPB10 RNA polymerase subunit family. Part of the RNA polymerase complex. Requires Zn(2+) as cofactor.

The protein localises to the cytoplasm. It carries out the reaction RNA(n) + a ribonucleoside 5'-triphosphate = RNA(n+1) + diphosphate. Its function is as follows. DNA-dependent RNA polymerase (RNAP) catalyzes the transcription of DNA into RNA using the four ribonucleoside triphosphates as substrates. The chain is DNA-directed RNA polymerase subunit Rpo10 from Methanosarcina barkeri (strain Fusaro / DSM 804).